The following is a 150-amino-acid chain: 3-hydroxyacyl-[acyl-carrier-protein] dehydratase FabZ (150 aa).

Histidine 52 is a catalytic residue.

Belongs to the thioester dehydratase family. FabZ subfamily.

It localises to the cytoplasm. It carries out the reaction a (3R)-hydroxyacyl-[ACP] = a (2E)-enoyl-[ACP] + H2O. Its function is as follows. Involved in unsaturated fatty acids biosynthesis. Catalyzes the dehydration of short chain beta-hydroxyacyl-ACPs and long chain saturated and unsaturated beta-hydroxyacyl-ACPs. The protein is 3-hydroxyacyl-[acyl-carrier-protein] dehydratase FabZ of Albidiferax ferrireducens (strain ATCC BAA-621 / DSM 15236 / T118) (Rhodoferax ferrireducens).